The following is a 624-amino-acid chain: Adhesion and hyphal regulator 1 (624 aa).

Positions 19–46 (CVTCRDRHIKCDEQQPVCKNCQKSNRKC) form a DNA-binding region, zn(2)-C6 fungal-type. Disordered stretches follow at residues 63–84 (DDNKPKELQQNEQPNSSHYAFP) and 230–250 (PQHHPMLDTSQHQETTSTDPN). Over residues 237–250 (DTSQHQETTSTDPN) the composition is skewed to polar residues.

In terms of assembly, interacts with MCM1.

It is found in the nucleus. In terms of biological role, transcription factor that binds the promoters of genes involved in biofilm formation, which include several key adhesion genes, and recruits MCM1 to these sites. Plays an important role in hyphal growth and virulence. Promotes conversion of opaque cells to white phase, but needs existence of EFG1, a key regulator required for maintenance of the white state. The polypeptide is Adhesion and hyphal regulator 1 (AHR1) (Candida albicans (strain SC5314 / ATCC MYA-2876) (Yeast)).